The chain runs to 244 residues: ATP synthase subunit a, chloroplastic (244 aa).

The next 5 membrane-spanning stretches (helical) occupy residues 35 to 55 (QVLI…VIAV), 92 to 112 (VPFI…GALL), 131 to 151 (INTT…AGLS), 196 to 216 (LVVV…VMFL), and 217 to 237 (GLFI…AYIG).

It belongs to the ATPase A chain family. F-type ATPases have 2 components, CF(1) - the catalytic core - and CF(0) - the membrane proton channel. CF(1) has five subunits: alpha(3), beta(3), gamma(1), delta(1), epsilon(1). CF(0) has four main subunits: a, b, b' and c.

The protein localises to the plastid. Its subcellular location is the chloroplast thylakoid membrane. Key component of the proton channel; it plays a direct role in the translocation of protons across the membrane. This Gossypium barbadense (Sea Island cotton) protein is ATP synthase subunit a, chloroplastic.